A 483-amino-acid polypeptide reads, in one-letter code: Cobyric acid synthase (483 aa).

The GATase cobBQ-type domain occupies 251 to 438 (ALIVAVPMLP…LHGVFSADRF (188 aa)). Cysteine 333 (nucleophile) is an active-site residue. Residue histidine 430 is part of the active site.

Belongs to the CobB/CobQ family. CobQ subfamily.

It participates in cofactor biosynthesis; adenosylcobalamin biosynthesis. In terms of biological role, catalyzes amidations at positions B, D, E, and G on adenosylcobyrinic A,C-diamide. NH(2) groups are provided by glutamine, and one molecule of ATP is hydrogenolyzed for each amidation. The sequence is that of Cobyric acid synthase from Brucella melitensis biotype 2 (strain ATCC 23457).